A 178-amino-acid chain; its full sequence is Large ribosomal subunit protein uL10 (178 aa).

This sequence belongs to the universal ribosomal protein uL10 family. Part of the ribosomal stalk of the 50S ribosomal subunit. The N-terminus interacts with L11 and the large rRNA to form the base of the stalk. The C-terminus forms an elongated spine to which L12 dimers bind in a sequential fashion forming a multimeric L10(L12)X complex.

In terms of biological role, forms part of the ribosomal stalk, playing a central role in the interaction of the ribosome with GTP-bound translation factors. The protein is Large ribosomal subunit protein uL10 of Albidiferax ferrireducens (strain ATCC BAA-621 / DSM 15236 / T118) (Rhodoferax ferrireducens).